The following is a 504-amino-acid chain: SPbeta prophage-derived uncharacterized protein YorI (504 aa).

The polypeptide is SPbeta prophage-derived uncharacterized protein YorI (yorI) (Bacillus subtilis (strain 168)).